The chain runs to 513 residues: Maturase K (513 aa).

The protein belongs to the intron maturase 2 family. MatK subfamily.

Its subcellular location is the plastid. The protein resides in the chloroplast. Usually encoded in the trnK tRNA gene intron. Probably assists in splicing its own and other chloroplast group II introns. In Molinia caerulea (Purple moor-grass), this protein is Maturase K.